Here is a 452-residue protein sequence, read N- to C-terminus: Cell division protein FtsZ (452 aa).

Residues 24–28 (GAGSN), 111–113 (GTG), glutamate 142, arginine 146, and aspartate 190 contribute to the GTP site.

Belongs to the FtsZ family. Homodimer. Polymerizes to form a dynamic ring structure in a strictly GTP-dependent manner. Interacts directly with several other division proteins.

The protein localises to the cytoplasm. Essential cell division protein that forms a contractile ring structure (Z ring) at the future cell division site. The regulation of the ring assembly controls the timing and the location of cell division. One of the functions of the FtsZ ring is to recruit other cell division proteins to the septum to produce a new cell wall between the dividing cells. Binds GTP and shows GTPase activity. The protein is Cell division protein FtsZ of Rickettsia typhi (strain ATCC VR-144 / Wilmington).